A 273-amino-acid chain; its full sequence is Putative phosphoenolpyruvate synthase regulatory protein (273 aa).

Residue 153 to 160 (AVSRAGKT) coordinates ADP.

The protein belongs to the pyruvate, phosphate/water dikinase regulatory protein family. PSRP subfamily.

The catalysed reaction is [pyruvate, water dikinase] + ADP = [pyruvate, water dikinase]-phosphate + AMP + H(+). It catalyses the reaction [pyruvate, water dikinase]-phosphate + phosphate + H(+) = [pyruvate, water dikinase] + diphosphate. Its function is as follows. Bifunctional serine/threonine kinase and phosphorylase involved in the regulation of the phosphoenolpyruvate synthase (PEPS) by catalyzing its phosphorylation/dephosphorylation. This chain is Putative phosphoenolpyruvate synthase regulatory protein, found in Xanthomonas campestris pv. campestris (strain ATCC 33913 / DSM 3586 / NCPPB 528 / LMG 568 / P 25).